The primary structure comprises 144 residues: Large ribosomal subunit protein uL16 (144 aa).

This sequence belongs to the universal ribosomal protein uL16 family. In terms of assembly, part of the 50S ribosomal subunit.

Functionally, binds 23S rRNA and is also seen to make contacts with the A and possibly P site tRNAs. The chain is Large ribosomal subunit protein uL16 from Porphyromonas gingivalis (strain ATCC 33277 / DSM 20709 / CIP 103683 / JCM 12257 / NCTC 11834 / 2561).